The sequence spans 431 residues: Peptidase B (431 aa).

The Mn(2+) site is built by lysine 196 and aspartate 201. The active site involves lysine 208. Aspartate 219, aspartate 278, and glutamate 280 together coordinate Mn(2+). Arginine 282 is an active-site residue.

Belongs to the peptidase M17 family. Homohexamer. The cofactor is Mn(2+).

Its subcellular location is the cytoplasm. The catalysed reaction is Release of an N-terminal amino acid, Xaa, from a peptide or arylamide. Xaa is preferably Glu or Asp but may be other amino acids, including Leu, Met, His, Cys and Gln.. Functionally, probably plays an important role in intracellular peptide degradation. This is Peptidase B from Photorhabdus laumondii subsp. laumondii (strain DSM 15139 / CIP 105565 / TT01) (Photorhabdus luminescens subsp. laumondii).